The following is a 204-amino-acid chain: Urease accessory protein UreG (204 aa).

Residue 12-19 (GPVGSGKT) participates in GTP binding.

Belongs to the SIMIBI class G3E GTPase family. UreG subfamily. In terms of assembly, homodimer. UreD, UreF and UreG form a complex that acts as a GTP-hydrolysis-dependent molecular chaperone, activating the urease apoprotein by helping to assemble the nickel containing metallocenter of UreC. The UreE protein probably delivers the nickel.

The protein resides in the cytoplasm. Its function is as follows. Facilitates the functional incorporation of the urease nickel metallocenter. This process requires GTP hydrolysis, probably effectuated by UreG. This is Urease accessory protein UreG from Pseudomonas aeruginosa (strain LESB58).